The chain runs to 368 residues: 3-dehydroquinate synthase (368 aa).

NAD(+) contacts are provided by residues 71–76 (DGEAFK), 105–109 (GVVGD), 129–130 (TT), lysine 142, lysine 151, and 169–172 (TLRT). Zn(2+)-binding residues include glutamate 184, histidine 247, and histidine 264.

This sequence belongs to the sugar phosphate cyclases superfamily. Dehydroquinate synthase family. Requires Co(2+) as cofactor. It depends on Zn(2+) as a cofactor. The cofactor is NAD(+).

It localises to the cytoplasm. The enzyme catalyses 7-phospho-2-dehydro-3-deoxy-D-arabino-heptonate = 3-dehydroquinate + phosphate. It participates in metabolic intermediate biosynthesis; chorismate biosynthesis; chorismate from D-erythrose 4-phosphate and phosphoenolpyruvate: step 2/7. Its function is as follows. Catalyzes the conversion of 3-deoxy-D-arabino-heptulosonate 7-phosphate (DAHP) to dehydroquinate (DHQ). The chain is 3-dehydroquinate synthase from Cupriavidus necator (strain ATCC 17699 / DSM 428 / KCTC 22496 / NCIMB 10442 / H16 / Stanier 337) (Ralstonia eutropha).